The sequence spans 175 residues: Large ribosomal subunit protein uL6 (175 aa).

The protein belongs to the universal ribosomal protein uL6 family. In terms of assembly, part of the 50S ribosomal subunit.

This protein binds to the 23S rRNA, and is important in its secondary structure. It is located near the subunit interface in the base of the L7/L12 stalk, and near the tRNA binding site of the peptidyltransferase center. This Xylella fastidiosa (strain M12) protein is Large ribosomal subunit protein uL6.